The chain runs to 349 residues: Ion-translocating oxidoreductase complex subunit D (349 aa).

3 consecutive transmembrane segments (helical) span residues 36–56, 77–99, and 124–144; these read CAFF…VALS, SAML…WMIV, and AMAA…TWIA. An FMN phosphoryl threonine modification is found at Thr185. The next 5 membrane-spanning stretches (helical) occupy residues 212 to 232, 239 to 259, 265 to 285, 291 to 311, and 315 to 335; these read STGV…IVLL, WHIS…GFLL, ASPL…FIAT, ATSP…VYII, and GGYP…APFI.

The protein belongs to the NqrB/RnfD family. As to quaternary structure, the complex is composed of six subunits: RnfA, RnfB, RnfC, RnfD, RnfE and RnfG. FMN serves as cofactor.

The protein localises to the cell inner membrane. In terms of biological role, part of a membrane-bound complex that couples electron transfer with translocation of ions across the membrane. The protein is Ion-translocating oxidoreductase complex subunit D of Shewanella oneidensis (strain ATCC 700550 / JCM 31522 / CIP 106686 / LMG 19005 / NCIMB 14063 / MR-1).